The following is a 589-amino-acid chain: Aspartate--tRNA ligase (589 aa).

Glu174 contacts L-aspartate. Residues 198 to 201 (QLFK) are aspartate. L-aspartate is bound at residue Arg220. ATP contacts are provided by residues 220-222 (RDE) and Gln229. His448 is an L-aspartate binding site. Glu483 is an ATP binding site. Arg490 serves as a coordination point for L-aspartate. 535–538 (GIDR) contacts ATP.

It belongs to the class-II aminoacyl-tRNA synthetase family. Type 1 subfamily. Homodimer.

It is found in the cytoplasm. It catalyses the reaction tRNA(Asp) + L-aspartate + ATP = L-aspartyl-tRNA(Asp) + AMP + diphosphate. In terms of biological role, catalyzes the attachment of L-aspartate to tRNA(Asp) in a two-step reaction: L-aspartate is first activated by ATP to form Asp-AMP and then transferred to the acceptor end of tRNA(Asp). This is Aspartate--tRNA ligase from Xylella fastidiosa (strain M23).